We begin with the raw amino-acid sequence, 339 residues long: MQQQAISEIQAAETLDALQAVKTKYVGKSGLVTRELGSLGKLPPEERKARGAEINTVRQAIDAALTEREGVLKRAALDARLASEAIDVTLPGLPLPAGGLHPINRVYEDLTGIYERMGYAVIEGPEVEDEHHNFEALNVPWYHPARDLQDTFWLEDGRLLRTHTSPMQIRYMVDHEPPLKIVVRGKVYRYEATDATHEAMFHQLEGLVVGDGISMADLKGTIAEMARGLYGPSAKVRFQPSYYPFVEPGADFAVWWDNPRGESKWLELGGCGMVHPNVFRAVDDLREAQGKPRIYEGKTGFAFGLGPERIAMLKYGIPDIRYFYANDPRVIGQFRGELG.

Residue Glu-247 participates in Mg(2+) binding.

It belongs to the class-II aminoacyl-tRNA synthetase family. Phe-tRNA synthetase alpha subunit type 1 subfamily. Tetramer of two alpha and two beta subunits. The cofactor is Mg(2+).

The protein localises to the cytoplasm. It catalyses the reaction tRNA(Phe) + L-phenylalanine + ATP = L-phenylalanyl-tRNA(Phe) + AMP + diphosphate + H(+). The protein is Phenylalanine--tRNA ligase alpha subunit of Deinococcus deserti (strain DSM 17065 / CIP 109153 / LMG 22923 / VCD115).